A 360-amino-acid chain; its full sequence is Phospho-N-acetylmuramoyl-pentapeptide-transferase (360 aa).

10 helical membrane-spanning segments follow: residues 26 to 46, 70 to 90, 94 to 114, 136 to 156, 164 to 184, 199 to 219, 236 to 256, 263 to 283, 289 to 309, and 339 to 359; these read GVLA…FFIA, GTPT…TLLW, GNPL…IGFV, LQSL…SNPV, FIPH…YFVI, GLAI…AYVS, SGQM…FLWF, VFMG…VAIV, VLFI…IQVV, and AVRF…SLKI.

Belongs to the glycosyltransferase 4 family. MraY subfamily. Requires Mg(2+) as cofactor.

Its subcellular location is the cell inner membrane. It catalyses the reaction UDP-N-acetyl-alpha-D-muramoyl-L-alanyl-gamma-D-glutamyl-meso-2,6-diaminopimeloyl-D-alanyl-D-alanine + di-trans,octa-cis-undecaprenyl phosphate = di-trans,octa-cis-undecaprenyl diphospho-N-acetyl-alpha-D-muramoyl-L-alanyl-D-glutamyl-meso-2,6-diaminopimeloyl-D-alanyl-D-alanine + UMP. It participates in cell wall biogenesis; peptidoglycan biosynthesis. In terms of biological role, catalyzes the initial step of the lipid cycle reactions in the biosynthesis of the cell wall peptidoglycan: transfers peptidoglycan precursor phospho-MurNAc-pentapeptide from UDP-MurNAc-pentapeptide onto the lipid carrier undecaprenyl phosphate, yielding undecaprenyl-pyrophosphoryl-MurNAc-pentapeptide, known as lipid I. This is Phospho-N-acetylmuramoyl-pentapeptide-transferase from Acidithiobacillus ferrooxidans (strain ATCC 23270 / DSM 14882 / CIP 104768 / NCIMB 8455) (Ferrobacillus ferrooxidans (strain ATCC 23270)).